We begin with the raw amino-acid sequence, 254 residues long: Type III pantothenate kinase (254 aa).

7 to 14 (DIGNTRLK) provides a ligand contact to ATP. Substrate is bound by residues Tyr-97 and 104 to 107 (GSDR). Asp-106 acts as the Proton acceptor in catalysis. Thr-134 lines the ATP pocket. Position 184 (Thr-184) interacts with substrate.

It belongs to the type III pantothenate kinase family. In terms of assembly, homodimer. It depends on NH4(+) as a cofactor. K(+) serves as cofactor.

It is found in the cytoplasm. The enzyme catalyses (R)-pantothenate + ATP = (R)-4'-phosphopantothenate + ADP + H(+). It functions in the pathway cofactor biosynthesis; coenzyme A biosynthesis; CoA from (R)-pantothenate: step 1/5. Functionally, catalyzes the phosphorylation of pantothenate (Pan), the first step in CoA biosynthesis. This chain is Type III pantothenate kinase, found in Methylibium petroleiphilum (strain ATCC BAA-1232 / LMG 22953 / PM1).